The chain runs to 52 residues: uncharacterized protein (52 aa).

This is an uncharacterized protein from Treponema pallidum (strain Nichols).